Reading from the N-terminus, the 528-residue chain is Phosphoenolpyruvate carboxykinase (ATP) (528 aa).

Arginine 56, tyrosine 192, and lysine 198 together coordinate substrate. Residues lysine 198, histidine 217, and glycine 233–threonine 241 contribute to the ATP site. Lysine 198 and histidine 217 together coordinate Mn(2+). Mn(2+) is bound at residue aspartate 254. The ATP site is built by glutamate 282, arginine 319, and threonine 444. A substrate-binding site is contributed by arginine 319.

This sequence belongs to the phosphoenolpyruvate carboxykinase (ATP) family. Mn(2+) serves as cofactor.

Its subcellular location is the cytoplasm. It catalyses the reaction oxaloacetate + ATP = phosphoenolpyruvate + ADP + CO2. The protein operates within carbohydrate biosynthesis; gluconeogenesis. Its function is as follows. Involved in the gluconeogenesis. Catalyzes the conversion of oxaloacetate (OAA) to phosphoenolpyruvate (PEP) through direct phosphoryl transfer between the nucleoside triphosphate and OAA. In Geobacillus thermodenitrificans (strain NG80-2), this protein is Phosphoenolpyruvate carboxykinase (ATP).